The following is a 282-amino-acid chain: Heterogeneous nuclear ribonucleoprotein C (282 aa).

The RRM domain maps to 17 to 88; the sequence is SRVFIGNLNT…QVLDINLAAE (72 aa). 2 disordered regions span residues 131–177 and 208–282; these read APPP…RLKG and QSKQ…EEDS. The short motif at 141–147 is the Nuclear localization signal element; the sequence is PSKRQRV. The segment covering 161–172 has biased composition (low complexity); that stretch reads SKSGQRGGSSKS. The stretch at 177-217 forms a coiled coil; the sequence is GDDLQAIKKELSQIKQRVDSLLENLERIERDQSKQDTKLDD. Composition is skewed to basic and acidic residues over residues 208–217 and 224–235; these read QSKQDTKLDD and LKKEETGVKLIE. Composition is skewed to acidic residues over residues 236-257 and 265-282; these read ETGD…EDTL and KETE…EEDS.

It belongs to the RRM HNRPC family. RALY subfamily. In terms of assembly, tetramer.

Its subcellular location is the nucleus. Its function is as follows. Binds pre-mRNA and nucleates the assembly of 40S hnRNP particles. Interacts with poly-U tracts in the 3'-UTR or 5'-UTR of mRNA and modulates the stability and the level of translation of bound mRNA molecules. Single HNRNPC tetramers bind 230-240 nucleotides. Trimers of HNRNPC tetramers bind 700 nucleotides. May play a role in the early steps of spliceosome assembly and pre-mRNA splicing. N6-methyladenosine (m6A) has been shown to alter the local structure in mRNAs and long non-coding RNAs (lncRNAs) via a mechanism named 'm(6)A-switch', facilitating binding of HNRNPC, leading to regulation of mRNA splicing. This Xenopus laevis (African clawed frog) protein is Heterogeneous nuclear ribonucleoprotein C (hnrnpc).